Consider the following 247-residue polypeptide: 4-nitrobenzoate reductase (247 aa).

An FMN-binding site is contributed by 29 to 33 (RRSVR). 4 residues coordinate NADP(+): Ser-59, Arg-112, Tyr-120, and Leu-126. Arg-232 lines the FMN pocket.

This sequence belongs to the nitroreductase family. It depends on FMN as a cofactor.

The enzyme catalyses 4-nitrobenzoate + 2 NADPH + 2 H(+) = 4-hydroxylaminobenzoate + 2 NADP(+) + H2O. Nitroreductase involved in the degradation of nitroaromatic compounds. Catalyzes the conversion of 4-nitrobenzoate to 4-hydroxylaminobenzoate. This Nocardioides sp. (strain LMS-CY) protein is 4-nitrobenzoate reductase.